The sequence spans 152 residues: Deoxyuridine 5'-triphosphate nucleotidohydrolase (152 aa).

Residues 71–73, Asn84, 88–90, and Met98 contribute to the substrate site; these read RSG and LID.

Belongs to the dUTPase family. Mg(2+) serves as cofactor.

It catalyses the reaction dUTP + H2O = dUMP + diphosphate + H(+). The protein operates within pyrimidine metabolism; dUMP biosynthesis; dUMP from dCTP (dUTP route): step 2/2. Functionally, this enzyme is involved in nucleotide metabolism: it produces dUMP, the immediate precursor of thymidine nucleotides and it decreases the intracellular concentration of dUTP so that uracil cannot be incorporated into DNA. The chain is Deoxyuridine 5'-triphosphate nucleotidohydrolase from Salmonella agona (strain SL483).